Here is a 176-residue protein sequence, read N- to C-terminus: MDQNNLSKSSEEIVEQRGIVSNRLYKDGITNNSLGNDHIGVELLSVKPEKLYEAISSLKKYGFNYLQCQGGYDEGPGKRLVSFYHLISLQDIEELEEIKEIRVKVFLNRDSDLSVPSLYKIFKGSDWQERETYDMYGINFQDHPNPKRILMPEDWRGWPLRKDYIQPDFYELQDAY.

This sequence belongs to the complex I 30 kDa subunit family. As to quaternary structure, NDH-1 can be composed of about 15 different subunits; different subcomplexes with different compositions have been identified which probably have different functions.

The protein resides in the cellular thylakoid membrane. The catalysed reaction is a plastoquinone + NADH + (n+1) H(+)(in) = a plastoquinol + NAD(+) + n H(+)(out). It catalyses the reaction a plastoquinone + NADPH + (n+1) H(+)(in) = a plastoquinol + NADP(+) + n H(+)(out). NDH-1 shuttles electrons from an unknown electron donor, via FMN and iron-sulfur (Fe-S) centers, to quinones in the respiratory and/or the photosynthetic chain. The immediate electron acceptor for the enzyme in this species is believed to be plastoquinone. Couples the redox reaction to proton translocation, and thus conserves the redox energy in a proton gradient. Cyanobacterial NDH-1 also plays a role in inorganic carbon-concentration. This is NAD(P)H-quinone oxidoreductase subunit J from Prochlorococcus marinus (strain MIT 9515).